The chain runs to 527 residues: MAVATTEELYQRLLRSIREGVDLQPKMVNVGTVIQVGDGVARISGLEQAMASELLEFPPKAGRSEPVYGIALNLEKDSVSAIILGDYLGIEEGDQVNSTGRVISVPVGQALIGRVVNALGQPIDGKGPIQTTTYRPIERIAPGVITRKSVDTPVQTGIIAIDSMIPIGRGQRELIIGDRQTGKTAVAIDTIINQKGQGMVCIYVAIGQKRAQVAQIINILEKYGALDYTIVVAATASESAALQYIAPYAGCAMGEEVMENGVMIDGREVRDALIVYDDLSKHATAYRQVSLLLRRPPGREAYPGDVFYLHSRLLERAARLNEDYGGGSLTALPIIETQANDVSAYIPTNVISITDGQIYLETDLFNAGIRPALNVGISVSRVGGAAQTRAMRSVSDRLKIDMAQFRDLAAFAQFASDLDATTRAQIERGQRLQEVLKQPQFQPMPLEEQVVILFAGINGYLDDVPINQIGRFKAELFTYMRTAHPEVGKMIYDNRLDRKFPSPEIRSAIENMLKEFKQMSDFSAEQA.

ATP is bound at residue glycine 177–threonine 184.

Belongs to the ATPase alpha/beta chains family. As to quaternary structure, F-type ATPases have 2 components, CF(1) - the catalytic core - and CF(0) - the membrane proton channel. CF(1) has five subunits: alpha(3), beta(3), gamma(1), delta(1), epsilon(1). CF(0) has four main subunits: a(1), b(1), b'(1) and c(9-12).

The protein resides in the cell membrane. It carries out the reaction ATP + H2O + 4 H(+)(in) = ADP + phosphate + 5 H(+)(out). Functionally, produces ATP from ADP in the presence of a proton gradient across the membrane. The alpha chain is a regulatory subunit. The polypeptide is ATP synthase subunit alpha (Roseiflexus sp. (strain RS-1)).